A 287-amino-acid chain; its full sequence is 4,4'-diapophytoene synthase (287 aa).

Residues 18–21 (HSKS), Tyr41, and Arg45 each bind (2E,6E)-farnesyl diphosphate. The Mg(2+) site is built by Asp48 and Asp52. Residue Gln165 coordinates (2E,6E)-farnesyl diphosphate. Asn168 provides a ligand contact to Mg(2+). Residue Arg171 coordinates (2E,6E)-farnesyl diphosphate. Asp172 is a binding site for Mg(2+). Residue Tyr248 participates in (2E,6E)-farnesyl diphosphate binding.

It belongs to the phytoene/squalene synthase family. CrtM subfamily. Mg(2+) serves as cofactor.

It catalyses the reaction 2 (2E,6E)-farnesyl diphosphate = 15-cis-4,4'-diapophytoene + 2 diphosphate. It participates in carotenoid biosynthesis; staphyloxanthin biosynthesis; staphyloxanthin from farnesyl diphosphate: step 1/5. Involved in the biosynthesis of the yellow-orange carotenoid staphyloxanthin, which plays a role in the virulence via its protective function against oxidative stress. Catalyzes the head-to-head condensation of two molecules of farnesyl diphosphate (FPP) into the colorless C(30) carotenoid 4,4'-diapophytoene (dehydrosqualene). The chain is 4,4'-diapophytoene synthase from Staphylococcus aureus.